Reading from the N-terminus, the 519-residue chain is Glycogen synthase (519 aa).

The segment at 1–40 is disordered; that stretch reads MISAAVEPHVDAFKPDNREPLTPDFATTGKAPGAQRQHNP. Residues 8-21 show a composition bias toward basic and acidic residues; it reads PHVDAFKPDNREPL. Lys57 contributes to the ADP-alpha-D-glucose binding site.

This sequence belongs to the glycosyltransferase 1 family. Bacterial/plant glycogen synthase subfamily.

The enzyme catalyses [(1-&gt;4)-alpha-D-glucosyl](n) + ADP-alpha-D-glucose = [(1-&gt;4)-alpha-D-glucosyl](n+1) + ADP + H(+). It participates in glycan biosynthesis; glycogen biosynthesis. Its function is as follows. Synthesizes alpha-1,4-glucan chains using ADP-glucose. This is Glycogen synthase from Pseudomonas putida (strain ATCC 47054 / DSM 6125 / CFBP 8728 / NCIMB 11950 / KT2440).